The primary structure comprises 175 residues: Disulfide bond formation protein B 2 (175 aa).

Residues 1–9 are Cytoplasmic-facing; the sequence is MYLARTRFL. Residues 10–26 form a helical membrane-spanning segment; sequence FFLASLACASIIGVAFY. The Periplasmic segment spans residues 27–44; the sequence is LQQAVGLDPCTLCMVQRA. A disulfide bridge links Cys36 with Cys39. The helical transmembrane segment at 45–61 threads the bilayer; it reads AFIACGVLALCAACHAP. The Cytoplasmic segment spans residues 62-68; that stretch reads GPTGTRR. A helical transmembrane segment spans residues 69–85; that stretch reads YSLGLLLVALAGLAGAG. The Periplasmic portion of the chain corresponds to 86-142; that stretch reads TQVWLQTASADQLIPFITRLEQILSLLSLDMCIDRLRSDALFCAEITWTLFGISLPE. The chain crosses the membrane as a helical span at residues 143-161; it reads WSLLAFTGLALLPLYPLFS. The Cytoplasmic segment spans residues 162 to 175; it reads ELSHWLATRDRGGY.

Belongs to the DsbB family.

It localises to the cell inner membrane. In terms of biological role, required for disulfide bond formation in some periplasmic proteins. Acts by oxidizing the DsbA protein. This is Disulfide bond formation protein B 2 from Pseudomonas syringae pv. syringae (strain B728a).